The sequence spans 175 residues: Urease accessory protein UreE (175 aa).

The disordered stretch occupies residues 151 to 175; that stretch reads GGAYGGSPSHAHRHSHVHSHSHETP. Over residues 160-169 the composition is skewed to basic residues; the sequence is HAHRHSHVHS.

It belongs to the UreE family.

The protein resides in the cytoplasm. Its function is as follows. Involved in urease metallocenter assembly. Binds nickel. Probably functions as a nickel donor during metallocenter assembly. The polypeptide is Urease accessory protein UreE (Synechococcus sp. (strain WH7805)).